Reading from the N-terminus, the 113-residue chain is MNTVRVTFLPVFVLAVSLGQADKDENRMEMQEKTEQGKSYLDFAENLLLQKLEELEAKLLEEDSEESRNSRQKRCIGEGVPCDENDPRCCSGLVCLKPTLHGIWYKSYYCYKK.

An N-terminal signal peptide occupies residues 1–21 (MNTVRVTFLPVFVLAVSLGQA). Positions 22–74 (DKDENRMEMQEKTEQGKSYLDFAENLLLQKLEELEAKLLEEDSEESRNSRQKR) are excised as a propeptide. Positions 61–83 (EEDSEESRNSRQKRCIGEGVPCD) are disordered. 3 disulfide bridges follow: C75-C90, C82-C95, and C89-C110.

This sequence belongs to the neurotoxin 14 (magi-1) family. 01 (HNTX-16) subfamily. Expressed by the venom gland.

It is found in the secreted. This chain is U11-theraphotoxin-Hhn1a, found in Cyriopagopus hainanus (Chinese bird spider).